Reading from the N-terminus, the 205-residue chain is NAD(P)H dehydrogenase (quinone) (205 aa).

One can recognise a Flavodoxin-like domain in the interval 3 to 194 (VLVVYYSMYG…AAARYQGKHV (192 aa)). Residues 9–14 (SMYGHI) and 82–84 (TRF) each bind FMN. NAD(+) is bound at residue Tyr-11. Trp-102 contributes to the substrate binding site. His-138 provides a ligand contact to FMN.

Belongs to the WrbA family. It depends on FMN as a cofactor.

The enzyme catalyses a quinone + NADH + H(+) = a quinol + NAD(+). The catalysed reaction is a quinone + NADPH + H(+) = a quinol + NADP(+). The chain is NAD(P)H dehydrogenase (quinone) from Geotalea daltonii (strain DSM 22248 / JCM 15807 / FRC-32) (Geobacter daltonii).